The following is a 287-amino-acid chain: ATP synthase gamma chain (287 aa).

It belongs to the ATPase gamma chain family. F-type ATPases have 2 components, CF(1) - the catalytic core - and CF(0) - the membrane proton channel. CF(1) has five subunits: alpha(3), beta(3), gamma(1), delta(1), epsilon(1). CF(0) has three main subunits: a, b and c.

The protein localises to the cell inner membrane. Functionally, produces ATP from ADP in the presence of a proton gradient across the membrane. The gamma chain is believed to be important in regulating ATPase activity and the flow of protons through the CF(0) complex. This Salmonella gallinarum (strain 287/91 / NCTC 13346) protein is ATP synthase gamma chain.